Here is a 484-residue protein sequence, read N- to C-terminus: ATP synthase subunit beta (484 aa).

168–175 is a binding site for ATP; sequence GGAGVGKT.

The protein belongs to the ATPase alpha/beta chains family. F-type ATPases have 2 components, CF(1) - the catalytic core - and CF(0) - the membrane proton channel. CF(1) has five subunits: alpha(3), beta(3), gamma(1), delta(1), epsilon(1). CF(0) has three main subunits: a(1), b(2) and c(9-12). The alpha and beta chains form an alternating ring which encloses part of the gamma chain. CF(1) is attached to CF(0) by a central stalk formed by the gamma and epsilon chains, while a peripheral stalk is formed by the delta and b chains.

It localises to the cell membrane. It catalyses the reaction ATP + H2O + 4 H(+)(in) = ADP + phosphate + 5 H(+)(out). In terms of biological role, produces ATP from ADP in the presence of a proton gradient across the membrane. The catalytic sites are hosted primarily by the beta subunits. The chain is ATP synthase subunit beta from Arthrobacter sp. (strain FB24).